A 194-amino-acid polypeptide reads, in one-letter code: Endo-1,4-beta-xylanase (194 aa).

An N-acetylglycine modification is found at Gly1. The region spanning 1-191 is the GH11 domain; sequence GTTPNSEGWH…SSGYARITVA (191 aa). Residue Glu86 is the Nucleophile of the active site. Cys110 and Cys154 are joined by a disulfide. The active-site Proton donor is Glu178.

Belongs to the glycosyl hydrolase 11 (cellulase G) family.

The enzyme catalyses Endohydrolysis of (1-&gt;4)-beta-D-xylosidic linkages in xylans.. It participates in glycan degradation; xylan degradation. The sequence is that of Endo-1,4-beta-xylanase from Byssochlamys spectabilis (Paecilomyces variotii).